We begin with the raw amino-acid sequence, 130 residues long: Small ribosomal subunit protein uS8 (130 aa).

It belongs to the universal ribosomal protein uS8 family.

This is Small ribosomal subunit protein uS8 (RPS22A) from Eremothecium gossypii (strain ATCC 10895 / CBS 109.51 / FGSC 9923 / NRRL Y-1056) (Yeast).